Reading from the N-terminus, the 284-residue chain is MTQPCIISVAITGSLPRKRDNPAVPITVSEQVESTQAAFEAGATLVHLHVRNDDETPSSEPDRFARVLEGIRKHAPGIITQVSTGGRSGAGRERGGMLSLRPDMASLATGSVNFPTRVYDNPPDLVDWLAAEMKAYAIKPEIEAFDLSMIFQAVAMQQAGKIDGALHIQFVMGIKNAMPVDREVLAFYVHTLRRLAPDATWTGAGIGRDQLTMARWSLELGGHCRTGLEDNVRLDKQTLAPSNAALVSQVAALCEEYGRPVATVAQARALLGLPSMEIDGRSPW.

Zn(2+) contacts are provided by His-47, His-49, and Glu-229.

This sequence belongs to the BKACE family. Zn(2+) is required as a cofactor.

It carries out the reaction 3-oxoadipate + acetyl-CoA = acetoacetate + succinyl-CoA. Its function is as follows. Catalyzes the condensation of 3-oxoadipate (beta-ketoadipate) and acetyl-CoA, forming acetoacetate and succinyl-CoA. Is likely involved is the degradation of 3-oxoadipate through an alternative pathway, within catechol degradation. This is 3-oxoadipate:acetyl-CoA acetyltransferase from Cupriavidus necator (strain ATCC 17699 / DSM 428 / KCTC 22496 / NCIMB 10442 / H16 / Stanier 337) (Ralstonia eutropha).